The following is a 297-amino-acid chain: tRNA pseudouridine synthase B (297 aa).

Asp44 functions as the Nucleophile in the catalytic mechanism.

This sequence belongs to the pseudouridine synthase TruB family. Type 1 subfamily.

It carries out the reaction uridine(55) in tRNA = pseudouridine(55) in tRNA. Responsible for synthesis of pseudouridine from uracil-55 in the psi GC loop of transfer RNAs. This chain is tRNA pseudouridine synthase B, found in Corynebacterium aurimucosum (strain ATCC 700975 / DSM 44827 / CIP 107346 / CN-1) (Corynebacterium nigricans).